The sequence spans 1067 residues: Mediator of RNA polymerase II transcription subunit 5 (1067 aa).

The protein belongs to the Mediator complex subunit 5 family. In terms of assembly, component of the Mediator complex.

Its subcellular location is the nucleus. Its function is as follows. Component of the Mediator complex, a coactivator involved in the regulated transcription of nearly all RNA polymerase II-dependent genes. Mediator functions as a bridge to convey information from gene-specific regulatory proteins to the basal RNA polymerase II transcription machinery. Mediator is recruited to promoters by direct interactions with regulatory proteins and serves as a scaffold for the assembly of a functional preinitiation complex with RNA polymerase II and the general transcription factors. This Kluyveromyces lactis (strain ATCC 8585 / CBS 2359 / DSM 70799 / NBRC 1267 / NRRL Y-1140 / WM37) (Yeast) protein is Mediator of RNA polymerase II transcription subunit 5 (NUT1).